The following is an 89-amino-acid chain: Small ribosomal subunit protein uS15 (89 aa).

It belongs to the universal ribosomal protein uS15 family. As to quaternary structure, part of the 30S ribosomal subunit. Forms a bridge to the 50S subunit in the 70S ribosome, contacting the 23S rRNA.

In terms of biological role, one of the primary rRNA binding proteins, it binds directly to 16S rRNA where it helps nucleate assembly of the platform of the 30S subunit by binding and bridging several RNA helices of the 16S rRNA. Forms an intersubunit bridge (bridge B4) with the 23S rRNA of the 50S subunit in the ribosome. This chain is Small ribosomal subunit protein uS15, found in Buchnera aphidicola subsp. Baizongia pistaciae (strain Bp).